Here is a 276-residue protein sequence, read N- to C-terminus: RNA-binding protein pno-1 (276 aa).

Disordered regions lie at residues 1–30 and 62–101; these read MATSSSAFDDEFPMEEGMPELLDDEDVPST and DVVMEDISQPDDSTTDSPDADAEQKPTKRSKGSKGESRVV. Residues 8–27 show a composition bias toward acidic residues; it reads FDDEFPMEEGMPELLDDEDV. The KH domain maps to 197–249; the sequence is GDHVSRAIGRIAGKDGRTKLVIENTTKTRIVVANTKIHILGAYQNLKLARNAV.

This sequence belongs to the PNO1 family. Part of the small subunit (SSU) processome, composed of more than 70 proteins and the RNA chaperone small nucleolar RNA (snoRNA) U3.

It localises to the nucleus. The protein resides in the nucleolus. Its function is as follows. Part of the small subunit (SSU) processome, first precursor of the small eukaryotic ribosomal subunit. During the assembly of the SSU processome in the nucleolus, many ribosome biogenesis factors, an RNA chaperone and ribosomal proteins associate with the nascent pre-rRNA and work in concert to generate RNA folding, modifications, rearrangements and cleavage as well as targeted degradation of pre-ribosomal RNA by the RNA exosome. Positively regulates dimethylation of two adjacent adenosines in the loop of a conserved hairpin near the 3'-end of 18S rRNA. This is RNA-binding protein pno-1 from Caenorhabditis briggsae.